The following is a 645-amino-acid chain: Chaperone protein DnaK (645 aa).

Thr-201 bears the Phosphothreonine; by autocatalysis mark. A compositionally biased stretch (low complexity) spans 606-629; it reads NTNNATAGDNNTTDTGSSSNSDGS. The tract at residues 606-645 is disordered; the sequence is NTNNATAGDNNTTDTGSSSNSDGSKVVDSDYQEIDKKDGK. Over residues 630–645 the composition is skewed to basic and acidic residues; the sequence is KVVDSDYQEIDKKDGK.

It belongs to the heat shock protein 70 family.

Acts as a chaperone. The chain is Chaperone protein DnaK from Ehrlichia ruminantium (strain Gardel).